We begin with the raw amino-acid sequence, 288 residues long: ATP synthase gamma chain (288 aa).

Belongs to the ATPase gamma chain family. As to quaternary structure, F-type ATPases have 2 components, CF(1) - the catalytic core - and CF(0) - the membrane proton channel. CF(1) has five subunits: alpha(3), beta(3), gamma(1), delta(1), epsilon(1). CF(0) has three main subunits: a, b and c.

It is found in the cell inner membrane. In terms of biological role, produces ATP from ADP in the presence of a proton gradient across the membrane. The gamma chain is believed to be important in regulating ATPase activity and the flow of protons through the CF(0) complex. The sequence is that of ATP synthase gamma chain from Legionella pneumophila (strain Paris).